The chain runs to 277 residues: Collectin-10 (277 aa).

Residues 1-27 (MNGFRVLLRSNLSMLLLLALLHFQSLG) form the signal peptide. The N-linked (GlcNAc...) asparagine glycan is linked to asparagine 11. Residues 41–103 (THTISPGPKG…IGKKGDKGEK (63 aa)) form a disordered region. The Collagen-like domain maps to 45 to 103 (SPGPKGDDGERGDTGEEGKDGKVGRQGPKGVKGELGDMGAQGNIGKSGPIGKKGDKGEK). The segment covering 49–67 (KGDDGERGDTGEEGKDGKV) has biased composition (basic and acidic residues). The C-type lectin domain maps to 155–271 (TEEKFYYIVQ…CHLTMYFVCE (117 aa)). 2 disulfide bridges follow: cysteine 176-cysteine 270 and cysteine 248-cysteine 262. Asparagine 258 carries an N-linked (GlcNAc...) asparagine glycan.

It belongs to the COLEC10/COLEC11 family. Expressed mainly in the liver and stomach, but also in muscles, testes, and intestines.

It is found in the secreted. The protein localises to the golgi apparatus. It localises to the cytoplasm. Functionally, lectin that binds to various sugars: galactose &gt; mannose = fucose &gt; N-acetylglucosamine &gt; N-acetylgalactosamine. Acts as a chemoattractant, probably involved in the regulation of cell migration. The protein is Collectin-10 (Colec10) of Mus musculus (Mouse).